Reading from the N-terminus, the 343-residue chain is S-adenosylmethionine:tRNA ribosyltransferase-isomerase (343 aa).

Belongs to the QueA family. Monomer.

The protein localises to the cytoplasm. The enzyme catalyses 7-aminomethyl-7-carbaguanosine(34) in tRNA + S-adenosyl-L-methionine = epoxyqueuosine(34) in tRNA + adenine + L-methionine + 2 H(+). It participates in tRNA modification; tRNA-queuosine biosynthesis. In terms of biological role, transfers and isomerizes the ribose moiety from AdoMet to the 7-aminomethyl group of 7-deazaguanine (preQ1-tRNA) to give epoxyqueuosine (oQ-tRNA). The protein is S-adenosylmethionine:tRNA ribosyltransferase-isomerase of Enterococcus faecalis (strain ATCC 700802 / V583).